The following is an 89-amino-acid chain: Small ribosomal subunit protein uS15 (89 aa).

The protein belongs to the universal ribosomal protein uS15 family. In terms of assembly, part of the 30S ribosomal subunit. Forms a bridge to the 50S subunit in the 70S ribosome, contacting the 23S rRNA.

One of the primary rRNA binding proteins, it binds directly to 16S rRNA where it helps nucleate assembly of the platform of the 30S subunit by binding and bridging several RNA helices of the 16S rRNA. Its function is as follows. Forms an intersubunit bridge (bridge B4) with the 23S rRNA of the 50S subunit in the ribosome. This Buchnera aphidicola subsp. Acyrthosiphon pisum (strain 5A) protein is Small ribosomal subunit protein uS15.